Consider the following 237-residue polypeptide: Demethylmenaquinone methyltransferase (237 aa).

S-adenosyl-L-methionine contacts are provided by residues threonine 58, aspartate 79, and 106–107 (NA).

The protein belongs to the class I-like SAM-binding methyltransferase superfamily. MenG/UbiE family.

The catalysed reaction is a 2-demethylmenaquinol + S-adenosyl-L-methionine = a menaquinol + S-adenosyl-L-homocysteine + H(+). It participates in quinol/quinone metabolism; menaquinone biosynthesis; menaquinol from 1,4-dihydroxy-2-naphthoate: step 2/2. Its function is as follows. Methyltransferase required for the conversion of demethylmenaquinol (DMKH2) to menaquinol (MKH2). The sequence is that of Demethylmenaquinone methyltransferase from Listeria innocua serovar 6a (strain ATCC BAA-680 / CLIP 11262).